The primary structure comprises 293 residues: Bifunctional protein FolD (293 aa).

NADP(+) is bound by residues 166–168 (GAS) and Ile232.

Belongs to the tetrahydrofolate dehydrogenase/cyclohydrolase family. In terms of assembly, homodimer.

It carries out the reaction (6R)-5,10-methylene-5,6,7,8-tetrahydrofolate + NADP(+) = (6R)-5,10-methenyltetrahydrofolate + NADPH. It catalyses the reaction (6R)-5,10-methenyltetrahydrofolate + H2O = (6R)-10-formyltetrahydrofolate + H(+). It functions in the pathway one-carbon metabolism; tetrahydrofolate interconversion. Catalyzes the oxidation of 5,10-methylenetetrahydrofolate to 5,10-methenyltetrahydrofolate and then the hydrolysis of 5,10-methenyltetrahydrofolate to 10-formyltetrahydrofolate. This chain is Bifunctional protein FolD, found in Yersinia enterocolitica serotype O:8 / biotype 1B (strain NCTC 13174 / 8081).